The chain runs to 183 residues: ATP-dependent protease subunit HslV (183 aa).

The active site involves Thr-13. Na(+) contacts are provided by Gly-168, Cys-171, and Thr-174.

This sequence belongs to the peptidase T1B family. HslV subfamily. As to quaternary structure, a double ring-shaped homohexamer of HslV is capped on each side by a ring-shaped HslU homohexamer. The assembly of the HslU/HslV complex is dependent on binding of ATP.

It localises to the cytoplasm. The catalysed reaction is ATP-dependent cleavage of peptide bonds with broad specificity.. Allosterically activated by HslU binding. Functionally, protease subunit of a proteasome-like degradation complex believed to be a general protein degrading machinery. The chain is ATP-dependent protease subunit HslV from Xanthomonas euvesicatoria pv. vesicatoria (strain 85-10) (Xanthomonas campestris pv. vesicatoria).